The primary structure comprises 161 residues: E3 ubiquitin ligase complex SCF subunit sconC (161 aa).

The interval 102–161 is interaction with the F-box domain of F-box proteins; the sequence is ILAANYLDIKPLLDIGCKTVANMIKGKSPEEIRKTFNIQNDFTPEEEDQIRRENEWAEDR.

This sequence belongs to the SKP1 family. As to quaternary structure, component of the SCF (SKP1-CUL1-F-box protein) E3 ubiquitin ligase complexes.

It functions in the pathway protein modification; protein ubiquitination. Functionally, essential component of the SCF (SKP1-CUL1-F-box protein) E3 ubiquitin ligase complexes, which mediate the ubiquitination and subsequent proteasomal degradation of target proteins. Controls sulfur metabolite repression, probably by mediating the inactivation or degradation of the metR transcription factor. This chain is E3 ubiquitin ligase complex SCF subunit sconC (sconC), found in Emericella nidulans (strain FGSC A4 / ATCC 38163 / CBS 112.46 / NRRL 194 / M139) (Aspergillus nidulans).